A 432-amino-acid polypeptide reads, in one-letter code: Interleukin-11 receptor subunit alpha-2 (432 aa).

Residues Met1 to Ser23 form the signal peptide. Over Ser24 to Ala372 the chain is Extracellular. In terms of domain architecture, Ig-like C2-type spans Pro27–Gly110. 3 disulfides stabilise this stretch: Cys48-Cys94, Cys120-Cys130, and Cys170-Cys180. 2 Fibronectin type-III domains span residues Pro112–Asp219 and Pro220–Thr317. Asn127 carries N-linked (GlcNAc...) asparagine glycosylation. The tract at residues Lys151 to Cys170 is disordered. Residue Asn194 is glycosylated (N-linked (GlcNAc...) asparagine). A WSXWS motif motif is present at residues Trp304–Ser308. The chain crosses the membrane as a helical span at residues Ser373 to Leu393. The Cytoplasmic segment spans residues Arg394–Ser432.

It belongs to the type I cytokine receptor family. Type 3 subfamily. In terms of assembly, on ligand binding, forms a multimer complex with IL6ST/gp130. In terms of tissue distribution, expression restricted to testis, lymph node and thymus. Highest level in testis.

The protein resides in the membrane. Functionally, receptor for interleukin-11. The receptor systems for IL6, LIF, OSM, CNTF, IL11 and CT1 can utilize IL6ST for initiating signal transmission. The IL11/IL11RA/IL6ST complex may be involved in the control of proliferation and/or differentiation of skeletogenic progenitor or other mesenchymal cells. The sequence is that of Interleukin-11 receptor subunit alpha-2 (Il11ra2) from Mus musculus (Mouse).